The primary structure comprises 460 residues: Xyloglucan 6-xylosyltransferase 1 (460 aa).

The Cytoplasmic segment spans residues 1-20 (MIEKCIGAHRFRRLQRFMRQ). Residues 21-40 (GKVTILCLVLTVIVLRGTIG) traverse the membrane as a helical; Signal-anchor for type II membrane protein segment. The Lumenal segment spans residues 41–460 (AGKFGTPEKD…KAAKLSTTTT (420 aa)). UDP-alpha-D-xylose-binding positions include glycine 156 and 227–229 (DSD). Residues aspartate 227 and aspartate 229 each coordinate Mn(2+). Residue histidine 346 coordinates substrate. Residues histidine 377, glycine 380, and lysine 382 each contribute to the UDP-alpha-D-xylose site. Residue histidine 377 coordinates Mn(2+). Residues lysine 382 and 389–390 (DY) contribute to the substrate site. Residue asparagine 431 is glycosylated (N-linked (GlcNAc...) asparagine).

The protein belongs to the glycosyltransferase 34 family. Forms homodimer. Interacts with XXT2. The cofactor is Mn(2+).

The protein localises to the golgi apparatus membrane. It carries out the reaction Transfers an alpha-D-xylosyl residue from UDP-D-xylose to a glucose residue in xyloglucan, forming an alpha-(1-&gt;6)-D-xylosyl-D-glucose linkage.. It functions in the pathway protein modification; protein glycosylation. Xylosyltransferase specific to UDP-D-xylose that accepts both cellopentaose and cellohexaose as substrates, with a better use of cellohexaose, to produce xyloglucan. Adds preferentially the first xylosyl residue to the fourth glucosyl residue from the reducing end of both acceptors. Transfer one xylose mainly to the second glucose residue from the non-reducing end. The acceptor should have a minimum of four glucose residues. This Arabidopsis thaliana (Mouse-ear cress) protein is Xyloglucan 6-xylosyltransferase 1.